We begin with the raw amino-acid sequence, 87 residues long: MANTAQARKRARQAVKQNAHNSSQRSTLRTAVKAVRKAIEAGDKAAAAQVFLASVSTIDRIADKKIIHKNKAARHKSRLAAALKALA.

Residues 1 to 29 (MANTAQARKRARQAVKQNAHNSSQRSTLR) form a disordered region. The segment covering 20 to 29 (HNSSQRSTLR) has biased composition (polar residues).

This sequence belongs to the bacterial ribosomal protein bS20 family.

Binds directly to 16S ribosomal RNA. The protein is Small ribosomal subunit protein bS20 of Janthinobacterium sp. (strain Marseille) (Minibacterium massiliensis).